The chain runs to 588 residues: Adenine deaminase (588 aa).

This sequence belongs to the metallo-dependent hydrolases superfamily. Adenine deaminase family. In terms of assembly, homodimer. Mn(2+) is required as a cofactor.

It carries out the reaction adenine + H2O + H(+) = hypoxanthine + NH4(+). This chain is Adenine deaminase, found in Escherichia coli (strain 55989 / EAEC).